The sequence spans 97 residues: Apolipoprotein C-II (97 aa).

A signal peptide spans 1-22 (MGSRFFLALFLVILMLGNEVQG). The lipid binding stretch occupies residues 63-71 (SMDEKLRDM). The interval 75–97 (SSAAMSTYAGIFTDQLLTLLRGE) is lipoprotein lipase cofactor.

Belongs to the apolipoprotein C2 family. As to expression, adult and fetal liver, intestine and peritoneal macrophages.

It localises to the secreted. Functionally, component of chylomicrons, very low-density lipoproteins (VLDL), low-density lipoproteins (LDL), and high-density lipoproteins (HDL) in plasma. Plays an important role in lipoprotein metabolism as an activator of lipoprotein lipase. The polypeptide is Apolipoprotein C-II (Apoc2) (Mus musculus (Mouse)).